Reading from the N-terminus, the 348-residue chain is Probable dual-specificity RNA methyltransferase RlmN (348 aa).

The active-site Proton acceptor is E93. Positions 99–333 (TEKRLTACLS…VSFRKSRGLD (235 aa)) constitute a Radical SAM core domain. Residues C106 and C338 are joined by a disulfide bond. Positions 113, 117, and 120 each coordinate [4Fe-4S] cluster. S-adenosyl-L-methionine is bound by residues 160-161 (GE), S190, 219-221 (SLH), and N295. C338 acts as the S-methylcysteine intermediate in catalysis.

This sequence belongs to the radical SAM superfamily. RlmN family. [4Fe-4S] cluster serves as cofactor.

Its subcellular location is the cytoplasm. The enzyme catalyses adenosine(2503) in 23S rRNA + 2 reduced [2Fe-2S]-[ferredoxin] + 2 S-adenosyl-L-methionine = 2-methyladenosine(2503) in 23S rRNA + 5'-deoxyadenosine + L-methionine + 2 oxidized [2Fe-2S]-[ferredoxin] + S-adenosyl-L-homocysteine. It carries out the reaction adenosine(37) in tRNA + 2 reduced [2Fe-2S]-[ferredoxin] + 2 S-adenosyl-L-methionine = 2-methyladenosine(37) in tRNA + 5'-deoxyadenosine + L-methionine + 2 oxidized [2Fe-2S]-[ferredoxin] + S-adenosyl-L-homocysteine. In terms of biological role, specifically methylates position 2 of adenine 2503 in 23S rRNA and position 2 of adenine 37 in tRNAs. The chain is Probable dual-specificity RNA methyltransferase RlmN from Prochlorococcus marinus (strain MIT 9312).